Reading from the N-terminus, the 557-residue chain is MSLIKKKNKDIRIIPLGGVGEIAKNMYIVEVDDEMFMLDAGLMFPEDEMLGVDIVIPDIQYVIENKERLKGIFLTHGHEHAIGAVSYVLEQIDAPVYGSKLTIALVKEAMKARNIKKKVRYYTVNHDSIMRFKNVNVSFFNTTHSIPDSLGVCIHTSYGSIVYTGEFKFDQSLHGHYAPDLKRMAEIGDEGVFALISDSTEAEKPGYNTPENIIEHHMYDAFAKVKGRLIVSCYASNFVRIQQVLNIASQLNRKVSFLGRSLESSFNIARKMGYFDIPKDLLIPINEVENYPKNEVIIIATGMQGEPVEALSQMARKKHKIMNIEEGDSIFLAITASANMEVIIADTLNELVRAGAHIIPNNKKIHASSHGCMEELKMMLNIMKPEYFVPVQGEFKMQIAHAKLAAETGVAPEKIFLVEKGDVISYNGKDMILNEKVQSGNILIDGIGVGDVGNIVLRDRHLLAEDGIFIAVVTLDPKNRRIAAGPEIQSRGFVYVRESEELLKEAEEKVRKIVEEGLQEKRIEWSEIKQNMRDQISKLLFESTKRRPMIIPVISEI.

Zn(2+)-binding residues include H76, H78, H144, and E166. 366 to 370 (HASSH) is a substrate binding site.

The protein belongs to the metallo-beta-lactamase superfamily. RNA-metabolizing metallo-beta-lactamase-like family. Bacterial RNase J subfamily. In terms of assembly, homodimer, may be a subunit of the RNA degradosome. Requires Zn(2+) as cofactor.

The protein resides in the cytoplasm. Functionally, an RNase that has 5'-3' exonuclease and possibly endoonuclease activity. Involved in maturation of rRNA and in some organisms also mRNA maturation and/or decay. The protein is Ribonuclease J 2 of Staphylococcus epidermidis (strain ATCC 35984 / DSM 28319 / BCRC 17069 / CCUG 31568 / BM 3577 / RP62A).